A 364-amino-acid polypeptide reads, in one-letter code: Melatonin receptor type 1B (364 aa).

The Extracellular portion of the chain corresponds to Met-1–Met-42. Asn-4 carries an N-linked (GlcNAc...) asparagine glycan. The helical transmembrane segment at Leu-43 to Leu-63 threads the bilayer. Topologically, residues Ser-64–Asn-76 are cytoplasmic. The helical transmembrane segment at Leu-77–Ile-97 threads the bilayer. At Leu-98 to Ala-115 the chain is on the extracellular side. Cys-113 and Cys-190 form a disulfide bridge. A helical transmembrane segment spans residues Ser-116–Ile-136. Topologically, residues Asn-137–Trp-155 are cytoplasmic. The chain crosses the membrane as a helical span at residues Tyr-156–Phe-176. Residues Phe-177–Tyr-200 lie on the Extracellular side of the membrane. A helical transmembrane segment spans residues Thr-201–Leu-221. At Arg-222 to Met-253 the chain is on the cytoplasmic side. The chain crosses the membrane as a helical span at residues Phe-254 to Val-274. At Ala-275–Glu-287 the chain is on the extracellular side. A helical transmembrane segment spans residues Gly-288 to Tyr-308. At Gly-309–Leu-364 the chain is on the cytoplasmic side. The interval Glu-343–Leu-364 is disordered. The segment covering Ala-352–Leu-364 has biased composition (low complexity).

The protein belongs to the G-protein coupled receptor 1 family.

The protein localises to the cell membrane. High affinity receptor for melatonin. The activity of this receptor is mediated by pertussis toxin sensitive G proteins that inhibits adenylate cyclase activity. The chain is Melatonin receptor type 1B (Mtnr1b) from Mus musculus (Mouse).